The chain runs to 102 residues: Large ribosomal subunit protein bL21 (102 aa).

It belongs to the bacterial ribosomal protein bL21 family. Part of the 50S ribosomal subunit. Contacts protein L20.

In terms of biological role, this protein binds to 23S rRNA in the presence of protein L20. The sequence is that of Large ribosomal subunit protein bL21 from Geotalea daltonii (strain DSM 22248 / JCM 15807 / FRC-32) (Geobacter daltonii).